The following is a 1402-amino-acid chain: DNA-directed RNA polymerase subunit beta' (1402 aa).

Zn(2+)-binding residues include cysteine 71, cysteine 73, cysteine 86, and cysteine 89. Mg(2+) is bound by residues aspartate 462, aspartate 464, and aspartate 466. 4 residues coordinate Zn(2+): cysteine 811, cysteine 885, cysteine 892, and cysteine 895.

It belongs to the RNA polymerase beta' chain family. The RNAP catalytic core consists of 2 alpha, 1 beta, 1 beta' and 1 omega subunit. When a sigma factor is associated with the core the holoenzyme is formed, which can initiate transcription. The cofactor is Mg(2+). Zn(2+) serves as cofactor.

The catalysed reaction is RNA(n) + a ribonucleoside 5'-triphosphate = RNA(n+1) + diphosphate. Functionally, DNA-dependent RNA polymerase catalyzes the transcription of DNA into RNA using the four ribonucleoside triphosphates as substrates. The protein is DNA-directed RNA polymerase subunit beta' of Bartonella henselae (strain ATCC 49882 / DSM 28221 / CCUG 30454 / Houston 1) (Rochalimaea henselae).